We begin with the raw amino-acid sequence, 247 residues long: Probable transcriptional regulatory protein DvMF_3201 (247 aa).

The disordered stretch occupies residues Met-1 to Arg-21.

The protein belongs to the TACO1 family.

The protein localises to the cytoplasm. The chain is Probable transcriptional regulatory protein DvMF_3201 from Nitratidesulfovibrio vulgaris (strain DSM 19637 / Miyazaki F) (Desulfovibrio vulgaris).